Consider the following 897-residue polypeptide: Pre-mRNA-splicing factor CWC22 homolog (897 aa).

Over residues 1-10 (MSSSRSQSPE) the composition is skewed to polar residues. Residues 1-155 (MSSSRSQSPE…EKKKKEPLDI (155 aa)) form a disordered region. Composition is skewed to basic and acidic residues over residues 36–54 (SSEK…REVS), 93–107 (RSKE…EKSP), and 131–155 (RSSE…PLDI). Residues 194-382 (KKKIHGLVNR…ETAMQIRKDK (189 aa)) enclose the MIF4G domain. Residues 444–472 (NADISDEDGGDELDDEEEGSDVEEAPKKT) form a disordered region. The segment covering 447-466 (ISDEDGGDELDDEEEGSDVE) has biased composition (acidic residues). In terms of domain architecture, MI spans 485 to 601 (AFRREVYLTM…DWKILADMKM (117 aa)). 2 stretches are compositionally biased toward low complexity: residues 689–710 (LDQL…SDSS) and 720–730 (DSSSDSSSSSE). The segment at 689 to 897 (LDQLKAESSS…VESDDRRRRR (209 aa)) is disordered. The span at 743–897 (NSEESSKKKE…VESDDRRRRR (155 aa)) shows a compositional bias: basic and acidic residues.

Belongs to the CWC22 family. In terms of tissue distribution, expressed in germ cells, oocytes, and sperm cells.

It is found in the nucleus. The protein localises to the nucleus speckle. Its function is as follows. Required for pre-mRNA splicing and for exon-junction complex (EJC) assembly. Hinders EIF4A3 from non-specifically binding RNA and escorts it to the splicing machinery to promote EJC assembly on mature mRNAs. Through its role in EJC assembly, required for nonsense-mediated mRNA decay. Plays a role in the nuclear retention of unspliced mRNAs. Plays a role in sex determination. Required for early embryogenesis and tissue differentiation. The polypeptide is Pre-mRNA-splicing factor CWC22 homolog (Caenorhabditis elegans).